Reading from the N-terminus, the 144-residue chain is MLKGIHPAISPDLLKILAEMGHGDELVLSDAHFPAHQLHHKVVRADGISINSLLTGITPLFEFDTYTEAPLIMMQAVEGDSLDPAVEQSYLQTIKSAVGNVPKLARMDRFAFYERAKQAYAVVITGETAKYGNIIIKKGVTPVK.

Residue His22 is the Proton donor of the active site. Residues Asp30, Arg109, and 131 to 133 (YGN) each bind substrate.

This sequence belongs to the RbsD / FucU family. FucU mutarotase subfamily. Homodecamer.

Its subcellular location is the cytoplasm. The catalysed reaction is alpha-L-fucose = beta-L-fucose. It functions in the pathway carbohydrate metabolism; L-fucose metabolism. Its function is as follows. Involved in the anomeric conversion of L-fucose. The polypeptide is L-fucose mutarotase (Histophilus somni (strain 2336) (Haemophilus somnus)).